Consider the following 153-residue polypeptide: Calmodulin-like protein 4 (153 aa).

4 EF-hand domains span residues 8–43 (DAIQ…LGTC), 44–79 (PTPG…QQKQ), 81–116 (DPEN…MGEK), and 117–152 (LTPE…PVPD).

Belongs to the calmodulin family. Associates with the IMAC/intermicrovillar adhesion complex.

Its subcellular location is the cell projection. It is found in the microvillus. Functionally, as part of the intermicrovillar adhesion complex/IMAC plays a role in epithelial brush border differentiation, controlling microvilli organization and length. Acts as a light chain for MYO7B and is required for efficient targeting of the IMAC to the tips of border brush microvilli. The chain is Calmodulin-like protein 4 (calml4) from Xenopus tropicalis (Western clawed frog).